The chain runs to 985 residues: DNA repair protein REV1 (985 aa).

The BRCT domain maps to Gln-161–Leu-249. Residues Tyr-319–Ser-329 are interaction with target DNA. DCTP is bound by residues Arg-324 and Asp-362–Phe-366. The 197-residue stretch at Ile-358–Gly-554 folds into the UmuC domain. Residues Asp-362 and Phe-363 each contribute to the Mg(2+) site. The interaction with target DNA stretch occupies residues Thr-395–Asn-397. DCTP is bound by residues Ser-402 to Arg-408, Asn-414, and Asp-467. Mg(2+)-binding residues include Asp-467 and Glu-468. 2 interaction with target DNA regions span residues Gly-554 to Thr-557 and Arg-620 to Asn-628.

It belongs to the DNA polymerase type-Y family. In terms of assembly, interacts with REV7. The cofactor is Mg(2+).

The protein localises to the nucleus. Its subcellular location is the mitochondrion. Its function is as follows. Deoxycytidyl transferase involved in DNA repair. Transfers a dCMP residue from dCTP to the 3'-end of a DNA primer in a template-dependent reaction. May assist in the first step in the bypass of abasic lesions by the insertion of a nucleotide opposite the lesion. Required for normal induction of mutations by physical and chemical agents. Involved in mitochondrial DNA mutagenesis. This chain is DNA repair protein REV1 (REV1), found in Saccharomyces cerevisiae (strain ATCC 204508 / S288c) (Baker's yeast).